The chain runs to 73 residues: MNFLLSKLLLGLIRFYQYCISPLIPPRCRYTPTCSQYAVEAVKKYGAFKGLRLAIKRIARCHPFGGHGHDPVP.

The protein belongs to the UPF0161 family.

It localises to the cell inner membrane. In terms of biological role, could be involved in insertion of integral membrane proteins into the membrane. This is Putative membrane protein insertion efficiency factor from Neisseria gonorrhoeae (strain ATCC 700825 / FA 1090).